The following is a 498-amino-acid chain: ATP synthase subunit alpha 1 (498 aa).

Belongs to the ATPase alpha/beta chains family. As to quaternary structure, F-type ATPases have 2 components, CF(1) - the catalytic core - and CF(0) - the membrane proton channel. CF(1) has five subunits: alpha(3), beta(3), gamma(1), delta(1), epsilon(1). CF(0) has three main subunits: a(1), b(2) and c(9-12). The alpha and beta chains form an alternating ring which encloses part of the gamma chain. CF(1) is attached to CF(0) by a central stalk formed by the gamma and epsilon chains, while a peripheral stalk is formed by the delta and b chains.

The protein localises to the cell membrane. The enzyme catalyses ATP + H2O + 4 H(+)(in) = ADP + phosphate + 5 H(+)(out). Its function is as follows. Produces ATP from ADP in the presence of a proton gradient across the membrane. The alpha chain is a regulatory subunit. This is ATP synthase subunit alpha 1 from Listeria monocytogenes serovar 1/2a (strain ATCC BAA-679 / EGD-e).